The sequence spans 290 residues: 33 kDa chaperonin (290 aa).

2 disulfides stabilise this stretch: cysteine 231–cysteine 233 and cysteine 263–cysteine 266.

The protein belongs to the HSP33 family. Under oxidizing conditions two disulfide bonds are formed involving the reactive cysteines. Under reducing conditions zinc is bound to the reactive cysteines and the protein is inactive.

Its subcellular location is the cytoplasm. Functionally, redox regulated molecular chaperone. Protects both thermally unfolding and oxidatively damaged proteins from irreversible aggregation. Plays an important role in the bacterial defense system toward oxidative stress. The chain is 33 kDa chaperonin from Thermotoga petrophila (strain ATCC BAA-488 / DSM 13995 / JCM 10881 / RKU-1).